The sequence spans 166 residues: NADH-quinone oxidoreductase subunit C (166 aa).

It belongs to the complex I 30 kDa subunit family. In terms of assembly, NDH-1 is composed of 14 different subunits. Subunits NuoB, C, D, E, F, and G constitute the peripheral sector of the complex.

The protein localises to the cell inner membrane. The catalysed reaction is a quinone + NADH + 5 H(+)(in) = a quinol + NAD(+) + 4 H(+)(out). Its function is as follows. NDH-1 shuttles electrons from NADH, via FMN and iron-sulfur (Fe-S) centers, to quinones in the respiratory chain. The immediate electron acceptor for the enzyme in this species is believed to be a menaquinone. Couples the redox reaction to proton translocation (for every two electrons transferred, four hydrogen ions are translocated across the cytoplasmic membrane), and thus conserves the redox energy in a proton gradient. The polypeptide is NADH-quinone oxidoreductase subunit C (Chlorobium phaeobacteroides (strain DSM 266 / SMG 266 / 2430)).